We begin with the raw amino-acid sequence, 430 residues long: Keratin, type I cytoskeletal 18 (430 aa).

Residue S2 is modified to N-acetylserine. The tract at residues 2–79 (SFTTRSTFST…GLAGMGGIQN (78 aa)) is head. S7, S10, S15, and S18 each carry phosphoserine. Phosphoserine; alternate occurs at positions 30 and 31. O-linked (GlcNAc) serine; alternate glycosylation is found at S30 and S31. S34 is modified (phosphoserine; by CDK1). Y36 bears the Phosphotyrosine mark. Phosphoserine is present on S42. Omega-N-methylarginine is present on R45. S49 carries the post-translational modification Phosphoserine; alternate. Residue S49 is glycosylated (O-linked (GlcNAc) serine; alternate). A Phosphoserine; by MAPKAPK2 and MAPKAPK3 modification is found at S51. T52 bears the Phosphothreonine mark. S53 is modified (phosphoserine; by CAMK, PKC/PRKCE and AURKA). R55 carries the omega-N-methylarginine modification. S60 is modified (phosphoserine). A Phosphothreonine modification is found at T65. A necessary for interaction with PNN region spans residues 70–373 (GLAGMGGIQN…EALLNIKVKL (304 aa)). Residues 77–128 (IQNEKETMQSLNDRLASYLDRVRSLETENRRLESKIREHLEKKGPQVRDWSH) are interaction with TRADD. Positions 80–115 (EKETMQSLNDRLASYLDRVRSLETENRRLESKIREH) are coil 1A. The IF rod domain maps to 80–391 (EKETMQSLND…RLLEDGEDFN (312 aa)). K81 participates in a covalent cross-link: Glycyl lysine isopeptide (Lys-Gly) (interchain with G-Cter in SUMO2). 2 positions are modified to phosphoserine: S93 and S100. Residues 116–132 (LEKKGPQVRDWSHYFKI) are linker 1. K131 is subject to N6-acetyllysine. A coil 1B region spans residues 133–224 (IEDLRAQIFA…KNHEEEVKGL (92 aa)). S177 carries the phosphoserine modification. The segment at 225–248 (QAQIASSGLTVEVDAPKSQDLAKI) is linker 12. The tract at residues 243–391 (QDLAKIMADI…RLLEDGEDFN (149 aa)) is interaction with DNAJB6. A Glycyl lysine isopeptide (Lys-Gly) (interchain with G-Cter in SUMO2) cross-link involves residue K247. Residues 249 to 387 (MADIRAQYDE…ATYRRLLEDG (139 aa)) form a coil 2 region. T302 carries the phosphothreonine modification. A phosphoserine mark is found at S305, S319, and S323. Residues K370 and K372 each participate in a glycyl lysine isopeptide (Lys-Gly) (interchain with G-Cter in SUMO2) cross-link. Positions 388–430 (EDFNLGDALDSSNSMQTIQKTTTRRIVDGKVVSETNDTKVLRH) are tail. Phosphoserine is present on residues S398, S399, and S401. T404 carries the phosphothreonine modification. A Glycyl lysine isopeptide (Lys-Gly) (interchain with G-Cter in SUMO2) cross-link involves residue K417. The residue at position 426 (K426) is an N6-acetyllysine; alternate. K426 participates in a covalent cross-link: Glycyl lysine isopeptide (Lys-Gly) (interchain with G-Cter in SUMO1); alternate. K426 participates in a covalent cross-link: Glycyl lysine isopeptide (Lys-Gly) (interchain with G-Cter in SUMO2); alternate.

Belongs to the intermediate filament family. In terms of assembly, heterotetramer of two type I and two type II keratins. KRT18 associates with KRT8. Interacts with PLEC isoform 1C, when in a heterodimer with KRT8. Interacts with the thrombin-antithrombin complex. Interacts with PNN and mutated CFTR. Interacts with YWHAE, YWHAH and YWHAZ only when phosphorylated. Interacts with DNAJB6, TCHP and TRADD. Interacts with FAM83H. Interacts with EPPK1. Interacts with PKP1 and PKP2. (Microbial infection) Interacts with hepatitis C virus/HCV core protein. Post-translationally, phosphorylation at Ser-34 increases during mitosis. Hyperphosphorylated at Ser-53 in diseased cirrhosis liver. Phosphorylation increases by IL-6. Proteolytically cleaved by caspases during epithelial cell apoptosis. Cleavage occurs at Asp-238 by either caspase-3, caspase-6 or caspase-7. In terms of processing, O-GlcNAcylation increases solubility, and decreases stability by inducing proteasomal degradation. In terms of tissue distribution, expressed in colon, placenta, liver and very weakly in exocervix. Increased expression observed in lymph nodes of breast carcinoma.

It is found in the nucleus matrix. It localises to the cytoplasm. The protein localises to the perinuclear region. Its subcellular location is the nucleus. The protein resides in the nucleolus. In terms of biological role, involved in the uptake of thrombin-antithrombin complexes by hepatic cells. When phosphorylated, plays a role in filament reorganization. Involved in the delivery of mutated CFTR to the plasma membrane. Together with KRT8, is involved in interleukin-6 (IL-6)-mediated barrier protection. In Homo sapiens (Human), this protein is Keratin, type I cytoskeletal 18 (KRT18).